The primary structure comprises 426 residues: Arrestin domain-containing protein 17 (426 aa).

Residues glutamine 320–lysine 329 are compositionally biased toward polar residues. The interval glutamine 320–aspartate 340 is disordered. The span at serine 331–aspartate 340 shows a compositional bias: basic and acidic residues.

This sequence belongs to the arrestin family. Interacts with tax-6. In terms of processing, phosphorylated. Dephosphorylated by tax-6 in vitro. As to expression, expressed from the comma stage to adulthood in the nervous system, including sensory neurons and interneurons posterior to the nerve ring, dorsal and ventral nerve cords, tail ganglia and, CEP, HSN, ASK, ADL, ASH and ASJ neurons.

Its function is as follows. Involved in several behavioral responses including chemotaxis towards lysine and adaptation to repeated osmotic stress. In addition, plays a role in resuming egg-laying and locomotion after starvation. The chain is Arrestin domain-containing protein 17 from Caenorhabditis elegans.